The sequence spans 353 residues: Photosystem II D2 protein (353 aa).

N-acetylthreonine is present on threonine 2. Threonine 2 carries the phosphothreonine modification. The chain crosses the membrane as a helical span at residues 41–61 (CAYFAVGGWFTGTTFVTSWYT). Histidine 118 lines the chlorophyll a pocket. The helical transmembrane segment at 125 to 141 (GFMLRQFELARSVQLRP) threads the bilayer. Residues glutamine 130 and asparagine 143 each contribute to the pheophytin a site. A helical membrane pass occupies residues 153 to 166 (VFVSVFLIYPLGQS). A chlorophyll a-binding site is contributed by histidine 198. The chain crosses the membrane as a helical span at residues 208-228 (AALLCAIHGATVENTLFEDGD). Residues histidine 215 and phenylalanine 262 each contribute to the a plastoquinone site. Histidine 215 contributes to the Fe cation binding site. A Fe cation-binding site is contributed by histidine 269. Residues 279-295 (GLWMSALGVVGLALNLR) form a helical membrane-spanning segment.

Belongs to the reaction center PufL/M/PsbA/D family. As to quaternary structure, PSII is composed of 1 copy each of membrane proteins PsbA, PsbB, PsbC, PsbD, PsbE, PsbF, PsbH, PsbI, PsbJ, PsbK, PsbL, PsbM, PsbT, PsbX, PsbY, PsbZ, Psb30/Ycf12, at least 3 peripheral proteins of the oxygen-evolving complex and a large number of cofactors. It forms dimeric complexes. It depends on The D1/D2 heterodimer binds P680, chlorophylls that are the primary electron donor of PSII, and subsequent electron acceptors. It shares a non-heme iron and each subunit binds pheophytin, quinone, additional chlorophylls, carotenoids and lipids. There is also a Cl(-1) ion associated with D1 and D2, which is required for oxygen evolution. The PSII complex binds additional chlorophylls, carotenoids and specific lipids. as a cofactor.

The protein resides in the plastid. The protein localises to the chloroplast thylakoid membrane. The catalysed reaction is 2 a plastoquinone + 4 hnu + 2 H2O = 2 a plastoquinol + O2. Its function is as follows. Photosystem II (PSII) is a light-driven water:plastoquinone oxidoreductase that uses light energy to abstract electrons from H(2)O, generating O(2) and a proton gradient subsequently used for ATP formation. It consists of a core antenna complex that captures photons, and an electron transfer chain that converts photonic excitation into a charge separation. The D1/D2 (PsbA/PsbD) reaction center heterodimer binds P680, the primary electron donor of PSII as well as several subsequent electron acceptors. D2 is needed for assembly of a stable PSII complex. The chain is Photosystem II D2 protein from Ipomoea purpurea (Common morning glory).